Here is a 159-residue protein sequence, read N- to C-terminus: uncharacterized protein (159 aa).

3 consecutive transmembrane segments (helical) span residues Ile-16–Phe-36, Val-84–Ile-104, and Val-112–Val-132.

The protein localises to the cell membrane. This is an uncharacterized protein from Bacillus subtilis (strain 168).